Here is a 540-residue protein sequence, read N- to C-terminus: CTP synthase (540 aa).

The tract at residues 1–264 is amidoligase domain; sequence MQYIVVTGGV…ISYLSKLSGK (264 aa). Ser-12 serves as a coordination point for CTP. Position 12 (Ser-12) interacts with UTP. 13–18 contributes to the ATP binding site; the sequence is GLGKGT. Position 53 (Tyr-53) interacts with L-glutamine. Position 70 (Asp-70) interacts with ATP. Positions 70 and 140 each coordinate Mg(2+). Residues 147 to 149, 185 to 190, and Arg-221 contribute to the CTP site; these read DIE and KTKPTQ. Residues 185-190 and Arg-221 each bind UTP; that span reads KTKPTQ. The Glutamine amidotransferase type-1 domain maps to 294-527; sequence YVDLHDAYIS…VQQALIYKKN (234 aa). Gly-347 contacts L-glutamine. The Nucleophile; for glutamine hydrolysis role is filled by Cys-374. L-glutamine-binding positions include 375 to 378, Glu-398, and Arg-455; that span reads LGFQ. Active-site residues include His-500 and Glu-502.

Belongs to the CTP synthase family. In terms of assembly, homotetramer.

The enzyme catalyses UTP + L-glutamine + ATP + H2O = CTP + L-glutamate + ADP + phosphate + 2 H(+). The catalysed reaction is L-glutamine + H2O = L-glutamate + NH4(+). It catalyses the reaction UTP + NH4(+) + ATP = CTP + ADP + phosphate + 2 H(+). The protein operates within pyrimidine metabolism; CTP biosynthesis via de novo pathway; CTP from UDP: step 2/2. Its activity is regulated as follows. Allosterically activated by GTP, when glutamine is the substrate; GTP has no effect on the reaction when ammonia is the substrate. The allosteric effector GTP functions by stabilizing the protein conformation that binds the tetrahedral intermediate(s) formed during glutamine hydrolysis. Inhibited by the product CTP, via allosteric rather than competitive inhibition. Its function is as follows. Catalyzes the ATP-dependent amination of UTP to CTP with either L-glutamine or ammonia as the source of nitrogen. Regulates intracellular CTP levels through interactions with the four ribonucleotide triphosphates. The chain is CTP synthase from Thermoplasma volcanium (strain ATCC 51530 / DSM 4299 / JCM 9571 / NBRC 15438 / GSS1).